Here is a 117-residue protein sequence, read N- to C-terminus: Large ribosomal subunit protein bL20 (117 aa).

Belongs to the bacterial ribosomal protein bL20 family.

In terms of biological role, binds directly to 23S ribosomal RNA and is necessary for the in vitro assembly process of the 50S ribosomal subunit. It is not involved in the protein synthesizing functions of that subunit. In Carboxydothermus hydrogenoformans (strain ATCC BAA-161 / DSM 6008 / Z-2901), this protein is Large ribosomal subunit protein bL20.